A 181-amino-acid polypeptide reads, in one-letter code: CASP-like protein 5A1 (181 aa).

Residues 1–38 (MFASRPVVHPLEVAAPAHPVQQPAPGVLMKDLPGMPGT) lie on the Cytoplasmic side of the membrane. Residues 39-59 (PGGLGLRVLQLLFAAISLAVM) traverse the membrane as a helical segment. The Extracellular segment spans residues 60–77 (SSTADFASVSAFCYLITT). The chain crosses the membrane as a helical span at residues 78-98 (TVLQCVWSLTVAIVDIYALLV). At 99-115 (KRCLQNRRAVTLFSIGD) the chain is on the cytoplasmic side. A helical membrane pass occupies residues 116–136 (GITWLVSFSGACAAAGIPVLI). At 137 to 153 (DADLIMCSENPCASFQT) the chain is on the extracellular side. A helical membrane pass occupies residues 154–174 (AVAMGFMCCFSLLPSFLLNFY). The Cytoplasmic segment spans residues 175-181 (SIASSHG).

Belongs to the Casparian strip membrane proteins (CASP) family. As to quaternary structure, homodimer and heterodimers.

It localises to the cell membrane. The chain is CASP-like protein 5A1 from Zea mays (Maize).